A 283-amino-acid chain; its full sequence is 4-diphosphocytidyl-2-C-methyl-D-erythritol kinase (283 aa).

Lysine 9 is an active-site residue. Residue 93–103 participates in ATP binding; the sequence is PIAAGLAGGSS. Aspartate 135 is an active-site residue.

This sequence belongs to the GHMP kinase family. IspE subfamily.

The catalysed reaction is 4-CDP-2-C-methyl-D-erythritol + ATP = 4-CDP-2-C-methyl-D-erythritol 2-phosphate + ADP + H(+). Its pathway is isoprenoid biosynthesis; isopentenyl diphosphate biosynthesis via DXP pathway; isopentenyl diphosphate from 1-deoxy-D-xylulose 5-phosphate: step 3/6. In terms of biological role, catalyzes the phosphorylation of the position 2 hydroxy group of 4-diphosphocytidyl-2C-methyl-D-erythritol. The protein is 4-diphosphocytidyl-2-C-methyl-D-erythritol kinase of Macrococcus caseolyticus (strain JCSC5402) (Macrococcoides caseolyticum).